The sequence spans 721 residues: DNA ligase (721 aa).

Residues 42–46, 91–92, and glutamate 125 each bind NAD(+); these read DAEYD and SL. The active-site N6-AMP-lysine intermediate is the lysine 127. The NAD(+) site is built by arginine 148, glutamate 184, lysine 300, and lysine 324. Residues cysteine 430, cysteine 433, cysteine 448, and cysteine 454 each coordinate Zn(2+). The region spanning 642 to 721 is the BRCT domain; it reads STGSPVEGKT…DAWFTLVGEE (80 aa).

It belongs to the NAD-dependent DNA ligase family. LigA subfamily. Requires Mg(2+) as cofactor. Mn(2+) is required as a cofactor.

It carries out the reaction NAD(+) + (deoxyribonucleotide)n-3'-hydroxyl + 5'-phospho-(deoxyribonucleotide)m = (deoxyribonucleotide)n+m + AMP + beta-nicotinamide D-nucleotide.. DNA ligase that catalyzes the formation of phosphodiester linkages between 5'-phosphoryl and 3'-hydroxyl groups in double-stranded DNA using NAD as a coenzyme and as the energy source for the reaction. It is essential for DNA replication and repair of damaged DNA. The sequence is that of DNA ligase from Brucella anthropi (strain ATCC 49188 / DSM 6882 / CCUG 24695 / JCM 21032 / LMG 3331 / NBRC 15819 / NCTC 12168 / Alc 37) (Ochrobactrum anthropi).